Here is a 267-residue protein sequence, read N- to C-terminus: NAD kinase (267 aa).

The Proton acceptor role is filled by aspartate 45. NAD(+) contacts are provided by residues 45–46 (DG), 123–124 (NE), arginine 149, aspartate 151, alanine 186, and asparagine 226.

It belongs to the NAD kinase family. Requires a divalent metal cation as cofactor.

It is found in the cytoplasm. It carries out the reaction NAD(+) + ATP = ADP + NADP(+) + H(+). Its function is as follows. Involved in the regulation of the intracellular balance of NAD and NADP, and is a key enzyme in the biosynthesis of NADP. Catalyzes specifically the phosphorylation on 2'-hydroxyl of the adenosine moiety of NAD to yield NADP. The protein is NAD kinase of Shouchella clausii (strain KSM-K16) (Alkalihalobacillus clausii).